The primary structure comprises 254 residues: tRNA pseudouridine synthase A (254 aa).

Catalysis depends on D52, which acts as the Nucleophile. Y111 is a binding site for substrate.

It belongs to the tRNA pseudouridine synthase TruA family. Homodimer.

The enzyme catalyses uridine(38/39/40) in tRNA = pseudouridine(38/39/40) in tRNA. Functionally, formation of pseudouridine at positions 38, 39 and 40 in the anticodon stem and loop of transfer RNAs. This Rhizorhabdus wittichii (strain DSM 6014 / CCUG 31198 / JCM 15750 / NBRC 105917 / EY 4224 / RW1) (Sphingomonas wittichii) protein is tRNA pseudouridine synthase A.